The sequence spans 255 residues: Hydroxyacylglutathione hydrolase (255 aa).

Zn(2+)-binding residues include His56, His58, Asp60, His61, His114, Asp133, and His171.

It belongs to the metallo-beta-lactamase superfamily. Glyoxalase II family. Monomer. Zn(2+) is required as a cofactor.

The enzyme catalyses an S-(2-hydroxyacyl)glutathione + H2O = a 2-hydroxy carboxylate + glutathione + H(+). It functions in the pathway secondary metabolite metabolism; methylglyoxal degradation; (R)-lactate from methylglyoxal: step 2/2. Thiolesterase that catalyzes the hydrolysis of S-D-lactoyl-glutathione to form glutathione and D-lactic acid. The chain is Hydroxyacylglutathione hydrolase from Cereibacter sphaeroides (strain ATCC 17029 / ATH 2.4.9) (Rhodobacter sphaeroides).